The following is a 190-amino-acid chain: Small ribosomal subunit protein uS4c (190 aa).

An S4 RNA-binding domain is found at 92-152 (RLDHVVYRAG…KSPSSAQLPP (61 aa)).

Belongs to the universal ribosomal protein uS4 family. In terms of assembly, part of the 30S ribosomal subunit. Contacts protein S5. The interaction surface between S4 and S5 is involved in control of translational fidelity.

It localises to the plastid. Its subcellular location is the chloroplast. In terms of biological role, one of the primary rRNA binding proteins, it binds directly to 16S rRNA where it nucleates assembly of the body of the 30S subunit. Its function is as follows. With S5 and S12 plays an important role in translational accuracy. The chain is Small ribosomal subunit protein uS4c (rps4) from Cyanidioschyzon merolae (strain NIES-3377 / 10D) (Unicellular red alga).